A 148-amino-acid polypeptide reads, in one-letter code: Copper transport protein ctr6 (148 aa).

The Extracellular portion of the chain corresponds to 1–33 (MNHGGNSTMRHCSMKMTFNTDYDNLCIVFKSWH). A helical membrane pass occupies residues 34-54 (IGNLSQFLLSLLAIAILGYLF). The Cytoplasmic segment spans residues 55-108 (ERLRSFTSLKETEFQRGYAGQQSEGLLTHHSKSLKSGRPFRLCALYAVQLVFSY). Residues 109–129 (FLMLVAMTYNAYVILAIAIGA) form a helical membrane-spanning segment. Topologically, residues 130–148 (AFGYRRSHCDTVQTVGLCH) are extracellular.

Belongs to the copper transporter (Ctr) (TC 1.A.56) family. SLC31A subfamily. Homotrimer.

The protein localises to the vacuole membrane. Mobilizes stored copper from the vacuole to the cytoplasm under conditions of copper limitation. The sequence is that of Copper transport protein ctr6 (ctr6) from Schizosaccharomyces pombe (strain 972 / ATCC 24843) (Fission yeast).